Reading from the N-terminus, the 201-residue chain is Ribonuclease HII (201 aa).

Positions 12–201 (DLVAGVDEVG…VRELLDVSVQ (190 aa)) constitute an RNase H type-2 domain. Aspartate 18, glutamate 19, and aspartate 110 together coordinate a divalent metal cation.

It belongs to the RNase HII family. Mn(2+) is required as a cofactor. Mg(2+) serves as cofactor.

It is found in the cytoplasm. The enzyme catalyses Endonucleolytic cleavage to 5'-phosphomonoester.. Endonuclease that specifically degrades the RNA of RNA-DNA hybrids. This chain is Ribonuclease HII, found in Pseudomonas aeruginosa (strain ATCC 15692 / DSM 22644 / CIP 104116 / JCM 14847 / LMG 12228 / 1C / PRS 101 / PAO1).